We begin with the raw amino-acid sequence, 168 residues long: Probable acetolactate synthase small subunit (168 aa).

The ACT domain maps to 10–84 (IISALVEHKP…DVIKVRDLEP (75 aa)).

Belongs to the acetolactate synthase small subunit family. In terms of assembly, dimer of large and small chains.

It carries out the reaction 2 pyruvate + H(+) = (2S)-2-acetolactate + CO2. The protein operates within amino-acid biosynthesis; L-isoleucine biosynthesis; L-isoleucine from 2-oxobutanoate: step 1/4. It participates in amino-acid biosynthesis; L-valine biosynthesis; L-valine from pyruvate: step 1/4. This chain is Probable acetolactate synthase small subunit (ilvH), found in Methanothermobacter thermautotrophicus (strain ATCC 29096 / DSM 1053 / JCM 10044 / NBRC 100330 / Delta H) (Methanobacterium thermoautotrophicum).